Consider the following 307-residue polypeptide: N-acetylmuramic acid 6-phosphate etherase (307 aa).

In terms of domain architecture, SIS spans 62-225 (IVLAFQKGAR…TTASMIRIGK (164 aa)). E90 serves as the catalytic Proton donor. E121 is an active-site residue.

It belongs to the GCKR-like family. MurNAc-6-P etherase subfamily. As to quaternary structure, homodimer.

It catalyses the reaction N-acetyl-D-muramate 6-phosphate + H2O = N-acetyl-D-glucosamine 6-phosphate + (R)-lactate. Its pathway is amino-sugar metabolism; 1,6-anhydro-N-acetylmuramate degradation. The protein operates within amino-sugar metabolism; N-acetylmuramate degradation. It participates in cell wall biogenesis; peptidoglycan recycling. Its function is as follows. Specifically catalyzes the cleavage of the D-lactyl ether substituent of MurNAc 6-phosphate, producing GlcNAc 6-phosphate and D-lactate. Together with AnmK, is also required for the utilization of anhydro-N-acetylmuramic acid (anhMurNAc) either imported from the medium or derived from its own cell wall murein, and thus plays a role in cell wall recycling. This Mesorhizobium japonicum (strain LMG 29417 / CECT 9101 / MAFF 303099) (Mesorhizobium loti (strain MAFF 303099)) protein is N-acetylmuramic acid 6-phosphate etherase.